Here is a 488-residue protein sequence, read N- to C-terminus: UDP-N-acetylmuramoyl-L-alanyl-D-glutamate--2,6-diaminopimelate ligase (488 aa).

UDP-N-acetyl-alpha-D-muramoyl-L-alanyl-D-glutamate is bound at residue Ser29. 108-114 (GTSGKTS) lines the ATP pocket. Residues 150-151 (TT), Ser177, Gln183, and Arg185 each bind UDP-N-acetyl-alpha-D-muramoyl-L-alanyl-D-glutamate. The residue at position 217 (Lys217) is an N6-carboxylysine. Meso-2,6-diaminopimelate-binding positions include Arg381, 405–408 (DNPR), Gly453, and Glu457. The Meso-diaminopimelate recognition motif motif lies at 405–408 (DNPR).

Belongs to the MurCDEF family. MurE subfamily. The cofactor is Mg(2+). Carboxylation is probably crucial for Mg(2+) binding and, consequently, for the gamma-phosphate positioning of ATP.

It localises to the cytoplasm. The enzyme catalyses UDP-N-acetyl-alpha-D-muramoyl-L-alanyl-D-glutamate + meso-2,6-diaminopimelate + ATP = UDP-N-acetyl-alpha-D-muramoyl-L-alanyl-gamma-D-glutamyl-meso-2,6-diaminopimelate + ADP + phosphate + H(+). It participates in cell wall biogenesis; peptidoglycan biosynthesis. Functionally, catalyzes the addition of meso-diaminopimelic acid to the nucleotide precursor UDP-N-acetylmuramoyl-L-alanyl-D-glutamate (UMAG) in the biosynthesis of bacterial cell-wall peptidoglycan. The polypeptide is UDP-N-acetylmuramoyl-L-alanyl-D-glutamate--2,6-diaminopimelate ligase (Brucella melitensis biotype 1 (strain ATCC 23456 / CCUG 17765 / NCTC 10094 / 16M)).